We begin with the raw amino-acid sequence, 228 residues long: DNA-binding response regulator MtrA (228 aa).

A Response regulatory domain is found at 7–120 (RILVVDDDAS…ELVARVRARL (114 aa)). Aspartate 56 is subject to 4-aspartylphosphate. Positions 128-227 (AEMLSIADVE…VRGVGYKAGP (100 aa)) form a DNA-binding region, ompR/PhoB-type.

In terms of processing, phosphorylated by MtrB.

In terms of biological role, member of the two-component regulatory system MtrA/MtrB. The protein is DNA-binding response regulator MtrA (mtrA) of Mycobacterium bovis (strain ATCC BAA-935 / AF2122/97).